A 303-amino-acid polypeptide reads, in one-letter code: NmrA-like family domain-containing oxidoreductase FVEG_08287 (303 aa).

Residues 8 to 13 (LGAGEL), 8 to 14 (LGAGELG), 36 to 39 (LRPS), Arg37, 56 to 57 (QG), 77 to 79 (IFR), and 159 to 162 (FMSF) contribute to the NADP(+) site.

Belongs to the NmrA-type oxidoreductase family.

NmrA-like family domain-containing oxidoreductase; part of the Fusarium detoxification of benzoxazolinone cluster 1 (FDB1) involved in the degradation of benzoxazolinones produced by the host plant. Maize, wheat, and rye produce the 2 benzoxazinone phytoanticipins 2,4-dihy-droxy-7-methoxy-1,4-benzoxazin-3-one (DIMBOA) and 2,4-dihydroxy-1,4-benzoxazin-3-one (DIBOA) that, due to their inherent instability once released, spontaneously degrade to the more stable corresponding benzoxazolinones, 6-methoxy-2-benzoxazolinone (MBOA) and 2-benzoxazolinone (BOA), respectively. The first step in the detoxification of benzoxazolinones involves the hydrolysis of the cyclic ester bond of benzoxazolinones by the FDB1 cluster gamma-lactamase MBL1 to aminophenols. MBL1 is able to convert BOA into 2-aminophenol (2-AP), as well as MBOA into 5-methoxy-2-aminophenol (2-AMP). The FDB2 cluster N-malonyltransferase FDB2/NAT1 then metabolizes aminophenols via N-malonylation to non-toxic malonamic acids. FDB2/NAT1 converts 2-AP into N-(2-hydroxyphenyl) malonamic acid (HPMA) and 2-AMP into N-(2-hydroxy-4-methoxyphenyl) malonamic acid (HMPMA). The duplicated dienlactone hydrolases DLH1 and DLH2 may provide redundant function for hydrolyzing the lactone moiety in the BOA molecule. The roles of the amidases an other enzymes encoded by the 2 FDB clusters have not been identified so far. The sequence is that of NmrA-like family domain-containing oxidoreductase FVEG_08287 from Gibberella moniliformis (strain M3125 / FGSC 7600) (Maize ear and stalk rot fungus).